The sequence spans 158 residues: Interleukin-36 alpha (158 aa).

Positions 1-5 (MEKAL) are excised as a propeptide. Tyr-96 carries the 3'-nitrotyrosine modification.

This sequence belongs to the IL-1 family. As to quaternary structure, interacts with TMED10; the interaction mediates the translocation from the cytoplasm into the ERGIC (endoplasmic reticulum-Golgi intermediate compartment) and thereby secretion. N-terminal truncation leads to a dramatic enhancement of its activity (&gt;1000-fold). As to expression, expressed in immune system and fetal brain, but not in other tissues tested or in multiple hematopoietic cell lines. Predominantly expressed in skin keratinocytes but not in fibroblasts, endothelial cells or melanocytes. Increased in lesional psoriasis skin.

The protein resides in the cytoplasm. The protein localises to the secreted. In terms of biological role, cytokine that binds to and signals through the IL1RL2/IL-36R receptor which in turn activates NF-kappa-B and MAPK signaling pathways in target cells linked to a pro-inflammatory response. Part of the IL-36 signaling system that is thought to be present in epithelial barriers and to take part in local inflammatory response; similar to the IL-1 system with which it shares the coreceptor IL1RAP. Seems to be involved in skin inflammatory response by acting on keratinocytes, dendritic cells and indirectly on T-cells to drive tissue infiltration, cell maturation and cell proliferation. In cultured keratinocytes induces the expression of macrophage, T-cell, and neutrophil chemokines, such as CCL3, CCL4, CCL5, CCL2, CCL17, CCL22, CL20, CCL5, CCL2, CCL17, CCL22, CXCL8, CCL20 and CXCL1, and the production of pro-inflammatory cytokines such as TNF-alpha, IL-8 and IL-6. In cultured monocytes up-regulates expression of IL-1A, IL-1B and IL-6. In myeloid dendritic cells involved in cell maturation by up-regulating surface expression of CD83, CD86 and HLA-DR. In monocyte-derived dendritic cells facilitates dendritic cell maturation and drives T-cell proliferation. May play a role in pro-inflammatory effects in the lung. In Homo sapiens (Human), this protein is Interleukin-36 alpha.